The following is a 1317-amino-acid chain: Putative late blight resistance protein homolog R1B-14 (1317 aa).

2 coiled-coil regions span residues 419–442 and 535–556; these read RYSDSLAFLKNQLQVIQTEFESLQ and RMNEEIVGFKDVIENLRNRLLN. Residues 521–823 form the NB-ARC domain; it reads TVITHTSSQL…SESFIKSSEG (303 aa). 568-575 contacts ATP; sequence GMPGLGKT. LRR repeat units lie at residues 944–968, 987–1015, 1090–1114, 1138–1161, 1164–1186, and 1187–1211; these read FKFLKVLDLEHQVVIDFIPTELFYL, LWNLETLILKSTPVGRHNTLLLPSTIWDM, PIRLEILKLYRSKAFKTIPFCISAP, LKHLEVLKLCDLEFGDHREWKVSN, FPQLKILKLEYLSLMKWIVADDA, and FPNLEQLVLHGCQDLMEIPSCFMDI. An HMA domain is found at 1251–1317; the sequence is IKKMVLKFDI…VSKLRKRGML (67 aa).

It belongs to the disease resistance NB-LRR family.

The protein resides in the cytoplasm. The protein localises to the membrane. In terms of biological role, confers resistance to late blight (Phytophthora infestans) races carrying the avirulence gene Avr1. Resistance proteins guard the plant against pathogens that contain an appropriate avirulence protein via an indirect interaction with this avirulence protein. That triggers a defense system including the hypersensitive response, which restricts the pathogen growth. This Solanum demissum (Wild potato) protein is Putative late blight resistance protein homolog R1B-14 (R1B-14).